Reading from the N-terminus, the 141-residue chain is Nucleoside triphosphatase NudI (141 aa).

Residues 1–141 (MRQRTIVCPL…RHTLALKGLL (141 aa)) form the Nudix hydrolase domain. The Nudix box signature appears at 38–59 (GGVEPGERIEEALRREVREELG).

The protein belongs to the Nudix hydrolase family. NudI subfamily. Monomer. Mg(2+) serves as cofactor.

It catalyses the reaction a ribonucleoside 5'-triphosphate + H2O = a ribonucleoside 5'-phosphate + diphosphate + H(+). The enzyme catalyses a 2'-deoxyribonucleoside 5'-triphosphate + H2O = a 2'-deoxyribonucleoside 5'-phosphate + diphosphate + H(+). It carries out the reaction dUTP + H2O = dUMP + diphosphate + H(+). The catalysed reaction is dTTP + H2O = dTMP + diphosphate + H(+). It catalyses the reaction dCTP + H2O = dCMP + diphosphate + H(+). Catalyzes the hydrolysis of nucleoside triphosphates, with a preference for pyrimidine deoxynucleoside triphosphates (dUTP, dTTP and dCTP). The polypeptide is Nucleoside triphosphatase NudI (Salmonella schwarzengrund (strain CVM19633)).